The primary structure comprises 204 residues: Small ribosomal subunit protein uS4 (204 aa).

One can recognise an S4 RNA-binding domain in the interval 94–157 (RRLDNVVYRL…KKLEVFKENL (64 aa)).

This sequence belongs to the universal ribosomal protein uS4 family. As to quaternary structure, part of the 30S ribosomal subunit. Contacts protein S5. The interaction surface between S4 and S5 is involved in control of translational fidelity.

In terms of biological role, one of the primary rRNA binding proteins, it binds directly to 16S rRNA where it nucleates assembly of the body of the 30S subunit. Its function is as follows. With S5 and S12 plays an important role in translational accuracy. In Sulfurihydrogenibium sp. (strain YO3AOP1), this protein is Small ribosomal subunit protein uS4.